A 500-amino-acid chain; its full sequence is Na(+)/H(+) antiporter NhaB (500 aa).

A run of 13 helical transmembrane segments spans residues 11–31 (HGFLGQSPLWYKAIICLFLVL), 34–54 (LLLVTVGPVAAGWALVLEFIF), 58–78 (MALKCYPLMPGGLLLVEALLL), 96–116 (VILLLMFMVAGIHFMKELLLF), 129–149 (AILSLLFCVLSAFLSAFLDAL), 150–170 (TVTAVIISAAVGFYAVYHRVA), 205–225 (LLMHGAVGTALGGVCTLVGEP), 241–261 (FFFKVAPVSLPVLGAGLLTCV), 311–331 (ILIICLGLHVAEVGLIGLMVI), 350–370 (FQDAMPFTSLLVVFFAVVAVI), 394–414 (MLYLANGLLSAISDNVFVATI), 450–470 (ATPNGQAAFLFLLTSAIAPLI), and 477–497 (MVWMALPYTVVMGGLGWWAVT).

It belongs to the NhaB Na(+)/H(+) (TC 2.A.34) antiporter family.

It localises to the cell inner membrane. The catalysed reaction is 2 Na(+)(in) + 3 H(+)(out) = 2 Na(+)(out) + 3 H(+)(in). Na(+)/H(+) antiporter that extrudes sodium in exchange for external protons. The chain is Na(+)/H(+) antiporter NhaB from Pseudomonas putida (strain GB-1).